We begin with the raw amino-acid sequence, 85 residues long: MAHKKGQGSSRNGRDSPGQHRGIKVYGSEKVVAGNILVRQVGTLVHPGANVGMGKDFTLFALVDGTVKYSRARGDRRIVSILPEA.

Residues 1–22 are disordered; sequence MAHKKGQGSSRNGRDSPGQHRG.

The protein belongs to the bacterial ribosomal protein bL27 family.

The polypeptide is Large ribosomal subunit protein bL27 (Anaeromyxobacter sp. (strain Fw109-5)).